Reading from the N-terminus, the 361-residue chain is Prostaglandin D2 receptor (361 aa).

Residues methionine 1–threonine 21 lie on the Extracellular side of the membrane. Asparagine 10 carries N-linked (GlcNAc...) asparagine glycosylation. Residues methionine 22 to alanine 42 traverse the membrane as a helical segment. Residues arginine 43–proline 58 lie on the Cytoplasmic side of the membrane. A helical membrane pass occupies residues serine 59–valine 79. Residues serine 80–alanine 107 lie on the Extracellular side of the membrane. Asparagine 90 is a glycosylation site (N-linked (GlcNAc...) asparagine). Cysteine 105 and cysteine 183 are disulfide-bonded. The helical transmembrane segment at phenylalanine 108–leucine 128 threads the bilayer. Residues glutamate 129–alanine 150 are Cytoplasmic-facing. The helical transmembrane segment at methionine 151 to phenylalanine 171 threads the bilayer. At glycine 172–serine 195 the chain is on the extracellular side. A helical transmembrane segment spans residues valine 196 to leucine 216. Topologically, residues cysteine 217–aspartate 262 are cytoplasmic. The chain crosses the membrane as a helical span at residues histidine 263–tyrosine 283. The Extracellular portion of the chain corresponds to arginine 284–arginine 310. Asparagine 297 carries an N-linked (GlcNAc...) asparagine glycan. Residues phenylalanine 311–phenylalanine 331 form a helical membrane-spanning segment. Topologically, residues arginine 332–leucine 361 are cytoplasmic.

It belongs to the G-protein coupled receptor 1 family.

The protein resides in the cell membrane. Its function is as follows. Receptor for prostaglandin D2 (PGD2). The activity of this receptor is mainly mediated by G(s) proteins that stimulate adenylate cyclase, resulting in an elevation of intracellular cAMP. A mobilization of calcium is also observed, but without formation of inositol 1,4,5-trisphosphate. Involved in PLA2G3-dependent maturation of mast cells. PLA2G3 is secreted by immature mast cells and acts on nearby fibroblasts upstream to PTDGS to synthesize PGD2, which in turn promotes mast cell maturation and degranulation via PTGDR. The polypeptide is Prostaglandin D2 receptor (PTGDR) (Bos taurus (Bovine)).